Consider the following 664-residue polypeptide: uncharacterized protein (664 aa).

An N-terminal signal peptide occupies residues 1–35; sequence MGVSVLTFHVSLFLKRILSIAFFLLSLSTLLRIVN. Residues asparagine 101 and asparagine 138 are each glycosylated (N-linked (GlcNAc...) asparagine). Sel1-like repeat units follow at residues 141–178 and 179–214; these read AFAN…KQGS and LDAH…DHLF. 3 N-linked (GlcNAc...) asparagine glycosylation sites follow: asparagine 221, asparagine 300, and asparagine 371. Sel1-like repeat units follow at residues 337-372, 373-409, 410-441, and 442-477; these read AQSC…TKND, SNSY…MNEN, PHAL…TQKS, and VISY…EAIR. Asparagine 454 and asparagine 537 each carry an N-linked (GlcNAc...) asparagine glycan. 2 Sel1-like repeats span residues 564-599 and 601-636; these read IDAI…EQSS and GMGL…SNQN.

Belongs to the sel-1 family.

This is an uncharacterized protein from Schizosaccharomyces pombe (strain 972 / ATCC 24843) (Fission yeast).